The following is a 613-amino-acid chain: Dihydroxy-acid dehydratase (613 aa).

Residue Asp-81 participates in Mg(2+) binding. [2Fe-2S] cluster is bound at residue Cys-122. The Mg(2+) site is built by Asp-123 and Lys-124. The residue at position 124 (Lys-124) is an N6-carboxylysine. A [2Fe-2S] cluster-binding site is contributed by Cys-193. Mg(2+) is bound at residue Glu-489. Ser-515 acts as the Proton acceptor in catalysis.

It belongs to the IlvD/Edd family. Homodimer. [2Fe-2S] cluster serves as cofactor. The cofactor is Mg(2+).

It carries out the reaction (2R)-2,3-dihydroxy-3-methylbutanoate = 3-methyl-2-oxobutanoate + H2O. The catalysed reaction is (2R,3R)-2,3-dihydroxy-3-methylpentanoate = (S)-3-methyl-2-oxopentanoate + H2O. It participates in amino-acid biosynthesis; L-isoleucine biosynthesis; L-isoleucine from 2-oxobutanoate: step 3/4. The protein operates within amino-acid biosynthesis; L-valine biosynthesis; L-valine from pyruvate: step 3/4. Functionally, functions in the biosynthesis of branched-chain amino acids. Catalyzes the dehydration of (2R,3R)-2,3-dihydroxy-3-methylpentanoate (2,3-dihydroxy-3-methylvalerate) into 2-oxo-3-methylpentanoate (2-oxo-3-methylvalerate) and of (2R)-2,3-dihydroxy-3-methylbutanoate (2,3-dihydroxyisovalerate) into 2-oxo-3-methylbutanoate (2-oxoisovalerate), the penultimate precursor to L-isoleucine and L-valine, respectively. This is Dihydroxy-acid dehydratase from Pseudomonas putida (strain ATCC 700007 / DSM 6899 / JCM 31910 / BCRC 17059 / LMG 24140 / F1).